Reading from the N-terminus, the 285-residue chain is Coagulation factor IX (285 aa).

The residue at position 23 (Y23) is a Sulfotyrosine. An N-linked (GlcNAc...) asparagine glycan is attached at N25. Residue T27 is modified to Phosphothreonine; alternate. The O-linked (GalNAc...) threonine; alternate glycan is linked to T27. The N-linked (GlcNAc...) asparagine glycan is linked to N45. A glycan (O-linked (GalNAc...) threonine) is linked at T47. The 227-residue stretch at 59–285 (VVGGEDAKPG…YTKVSRYVNW (227 aa)) folds into the Peptidase S1 domain. C84 and C100 are disulfide-bonded. H99 functions as the Charge relay system in the catalytic mechanism. Residues N115, E120, and E123 each coordinate Ca(2+). N-linked (GlcNAc...) asparagine glycans are attached at residues N127 and N138. The Charge relay system role is filled by D147. 2 cysteine pairs are disulfide-bonded: C214-C228 and C239-C267. Catalysis depends on S243, which acts as the Charge relay system.

It belongs to the peptidase S1 family. As to quaternary structure, heterodimer of a light chain and a heavy chain; disulfide-linked. Interacts (inactive and activated) with F11 (activated) in calcium-dependent manner. Interacts with SERPINC1. Activated by factor XIa, which excises the activation peptide. The propeptide can also be removed by snake venom protease. Activated by coagulation factor VIIa-tissue factor (F7-F3) complex in calcium-dependent manner.

The protein resides in the secreted. It carries out the reaction Selective cleavage of Arg-|-Ile bond in factor X to form factor Xa.. Factor IX is a vitamin K-dependent plasma protein that participates in the intrinsic pathway of blood coagulation by converting factor X to its active form in the presence of Ca(2+) ions, phospholipids, and factor VIIIa. This chain is Coagulation factor IX (F9), found in Cavia porcellus (Guinea pig).